We begin with the raw amino-acid sequence, 225 residues long: Cytidylate kinase (225 aa).

An ATP-binding site is contributed by G11 to T19.

It belongs to the cytidylate kinase family. Type 1 subfamily.

It is found in the cytoplasm. The catalysed reaction is CMP + ATP = CDP + ADP. It carries out the reaction dCMP + ATP = dCDP + ADP. This chain is Cytidylate kinase, found in Bacillus cereus (strain AH187).